Here is a 101-residue protein sequence, read N- to C-terminus: Movement protein (101 aa).

The tract at residues methionine 1 to glycine 22 is disordered. The chain crosses the membrane as a helical span at residues glutamate 30–leucine 50. The segment at asparagine 79–glycine 101 is disordered. A compositionally biased stretch (polar residues) spans proline 80–asparagine 92.

It belongs to the mastrevirus movement protein family. In terms of assembly, interacts with the capsid protein (CP). Part of a MP-CP-viral DNA complex.

The protein resides in the host membrane. Its function is as follows. Involved in the viral transport within, and between cells. The sequence is that of Movement protein from Avena sativa (Oat).